An 835-amino-acid polypeptide reads, in one-letter code: Phenylalanine--tRNA ligase beta subunit (835 aa).

The 117-residue stretch at 44–160 folds into the tRNA-binding domain; sequence PETTGPLVFG…SYGEPGEDAR (117 aa). Positions 419–494 constitute a B5 domain; the sequence is PAMQPITMKV…RLEGLEAIPT (76 aa). 4 residues coordinate Mg(2+): aspartate 472, aspartate 478, glutamate 481, and glutamate 482. One can recognise an FDX-ACB domain in the interval 741-834; sequence SSFPALHQDI…AKEKFNAEMR (94 aa).

It belongs to the phenylalanyl-tRNA synthetase beta subunit family. Type 1 subfamily. In terms of assembly, tetramer of two alpha and two beta subunits. The cofactor is Mg(2+).

Its subcellular location is the cytoplasm. The catalysed reaction is tRNA(Phe) + L-phenylalanine + ATP = L-phenylalanyl-tRNA(Phe) + AMP + diphosphate + H(+). This chain is Phenylalanine--tRNA ligase beta subunit, found in Corynebacterium glutamicum (strain ATCC 13032 / DSM 20300 / JCM 1318 / BCRC 11384 / CCUG 27702 / LMG 3730 / NBRC 12168 / NCIMB 10025 / NRRL B-2784 / 534).